Reading from the N-terminus, the 344-residue chain is Phosphate acyltransferase (344 aa).

This sequence belongs to the PlsX family. Homodimer. Probably interacts with PlsY.

It is found in the cytoplasm. The enzyme catalyses a fatty acyl-[ACP] + phosphate = an acyl phosphate + holo-[ACP]. Its pathway is lipid metabolism; phospholipid metabolism. In terms of biological role, catalyzes the reversible formation of acyl-phosphate (acyl-PO(4)) from acyl-[acyl-carrier-protein] (acyl-ACP). This enzyme utilizes acyl-ACP as fatty acyl donor, but not acyl-CoA. This is Phosphate acyltransferase from Sphingopyxis alaskensis (strain DSM 13593 / LMG 18877 / RB2256) (Sphingomonas alaskensis).